The sequence spans 917 residues: Probable dipeptidyl-aminopeptidase B (917 aa).

The segment covering 1–16 (MATEKGHGRDDEERVP) has biased composition (basic and acidic residues). Positions 1 to 21 (MATEKGHGRDDEERVPLTRGS) are disordered. At 1-99 (MATEKGHGRD…KPMHKSVKIA (99 aa)) the chain is on the cytoplasmic side. A helical; Signal-anchor for type II membrane protein membrane pass occupies residues 100-120 (LWTLLFLSLGGWSLAFVLFIF). Residues 121 to 917 (RSHDTYETPI…RAATWAGLSI (797 aa)) lie on the Vacuolar side of the membrane. N-linked (GlcNAc...) asparagine glycans are attached at residues Asn-135, Asn-351, and Asn-574. Ser-756 (charge relay system) is an active-site residue. Asn-815 is a glycosylation site (N-linked (GlcNAc...) asparagine). Active-site charge relay system residues include Asp-833 and His-866. Residue Asn-902 is glycosylated (N-linked (GlcNAc...) asparagine).

The protein belongs to the peptidase S9B family.

The protein localises to the vacuole membrane. It carries out the reaction Release of an N-terminal dipeptide, Xaa-Yaa-|-Zaa-, from a polypeptide, preferentially when Yaa is Pro, provided Zaa is neither Pro nor hydroxyproline.. Functionally, type IV dipeptidyl-peptidase which removes N-terminal dipeptides sequentially from polypeptides having unsubstituted N-termini provided that the penultimate residue is proline. This chain is Probable dipeptidyl-aminopeptidase B (DAPB), found in Ajellomyces capsulatus (strain H88) (Darling's disease fungus).